We begin with the raw amino-acid sequence, 219 residues long: MASLKSIIRQGKQTRSDLKQLRNSGKVPAVVYGYGTKNTSVKVDEVEFIKVIREVGRNGVIDLGVGSKTIKVMVSDYQFDPLKNQITHIDFLAINMSEERTVEVQVQLVGEAVGAKEGGVVEQPLFNLEVTATPENIPETIEVDISELQVNDSLAVSDIKISGDFTIENNPEDSIVTVVPPTDEPSEEEVEAMEGESATEEPEVVDEDKEDDEEENKED.

A disordered region spans residues 176 to 219 (VTVVPPTDEPSEEEVEAMEGESATEEPEVVDEDKEDDEEENKED). A compositionally biased stretch (acidic residues) spans 184–219 (EPSEEEVEAMEGESATEEPEVVDEDKEDDEEENKED).

It belongs to the bacterial ribosomal protein bL25 family. CTC subfamily. Part of the 50S ribosomal subunit; part of the 5S rRNA/L5/L18/L25 subcomplex. Contacts the 5S rRNA. Binds to the 5S rRNA independently of L5 and L18.

In terms of biological role, this is one of the proteins that binds to the 5S RNA in the ribosome where it forms part of the central protuberance. The sequence is that of Large ribosomal subunit protein bL25 from Staphylococcus epidermidis (strain ATCC 12228 / FDA PCI 1200).